Consider the following 477-residue polypeptide: Cysteine--tRNA ligase (477 aa).

Zn(2+) is bound at residue Cys29. The short motif at 31-41 is the 'HIGH' region element; that stretch reads PTVYDYPHLGH. Positions 209, 234, and 238 each coordinate Zn(2+). Positions 266 to 270 match the 'KMSKS' region motif; it reads KMSKS. Position 269 (Lys269) interacts with ATP.

This sequence belongs to the class-I aminoacyl-tRNA synthetase family. Zn(2+) serves as cofactor.

The protein localises to the cytoplasm. It carries out the reaction tRNA(Cys) + L-cysteine + ATP = L-cysteinyl-tRNA(Cys) + AMP + diphosphate. The polypeptide is Cysteine--tRNA ligase (cysS) (Pyrococcus abyssi (strain GE5 / Orsay)).